Here is a 1004-residue protein sequence, read N- to C-terminus: Caspase recruitment domain-containing protein 14 (1004 aa).

The 93-residue stretch at 15–107 folds into the CARD domain; the sequence is DEETLWEMME…DVYTLVTGLQ (93 aa). The stretch at 128 to 409 forms a coiled coil; the sequence is LAGAIGSLQE…RTQLRQLQAE (282 aa). Positions 409–568 are maintains the protein in an inactive state; that stretch reads EPPGVLKQEA…RRPARRILSQ (160 aa). Position 544 is a phosphoserine (serine 544). Residues 568–658 form the PDZ domain; the sequence is QVTMLAFQGD…FCCLSVKVNT (91 aa). Residues 807–990 enclose the Guanylate kinase-like domain; sequence AESCLTLVPY…LLSCVRQAIA (184 aa).

Interacts (via CARD domain) with BCL10 (via CARD domain). Forms a complex with MALT1 and BCL10; resulting in the formation of a CBM (CARD14-BLC10-MALT1) complex. Interacts with TRAF2, TRAF3 and TRAF6. As to expression, isoform 1 is detected in placenta and epidermal keratinocytes. Isoform 2 is detected in leukocytes and fetal brain.

The protein localises to the cytoplasm. Functionally, acts as a scaffolding protein that can activate the inflammatory transcription factor NF-kappa-B and p38/JNK MAP kinase signaling pathways. Forms a signaling complex with BCL10 and MALT1, and activates MALT1 proteolytic activity and inflammatory gene expression. MALT1 is indispensable for CARD14-induced activation of NF-kappa-B and p38/JNK MAP kinases. May play a role in signaling mediated by TRAF2, TRAF3 and TRAF6 and protects cells against apoptosis. In terms of biological role, not able to activate the inflammatory transcription factor NF-kappa-B and may function as a dominant negative regulator. The protein is Caspase recruitment domain-containing protein 14 (CARD14) of Homo sapiens (Human).